The sequence spans 495 residues: uncharacterized protein (495 aa).

The protein resides in the cytoplasm. It is found in the nucleus. This is an uncharacterized protein from Saccharomyces cerevisiae (strain ATCC 204508 / S288c) (Baker's yeast).